Here is a 729-residue protein sequence, read N- to C-terminus: MLYKGDTLYLDWLEDGIAELVFDAPGSVNKLDTATVASLGQALEVLEKQHDLKGLLLRSNKAAFIVGADITEFLSLFLVPEEQLSQWLHFANSVFNRLEDLPVPTLAAVNGYALGGGCECVLATDYRLATPDLRIGLPETKLGIMPGFGGSVRMPRMLGADSALEIIAAGKDIGAEQALKIGLVDGVVKQEKLIDGAIAVLRQAITGDLDWRAKRQPKLEPLKLSKIEAAMSFTIAKGMVAQTAGKHYPAPMTAVKTIEAAARFGREEALNLENKSFVPLAHTNEARALVGIFLNDQYVKGKAKKLTKDIETPKQAAVLGAGIMGGGIAYQSAWKGVPVIMKDINDKSLNLGMTEAAKLLNKQLERGKIDGLKLAGVISTIHPTLDYAGFDRVDVVVEAVVENPKVKKAVLAETEQKVRPETVLASNTSTIPIRELASALERPENFCGMHFFNPVHRMPLVEIIRGEKSSDETIAKVVAWASKMGKTPIVVNDCPGFFVNRVLFPYFAGFSQLLRDGADFRKVDKVMEKQFGWPMGPAYLLDVVGIDTAHHAQAVMAAGFPQRMQKEYRDAIDALFDASRFGQKNGLGFWRYKEDSKGKPKKEEDAAVDDLLASVSQPKRDFSDDEIIARMMIPMINEVVRCLEEGIIASPAEADMALVYGLGFPPFHGGAFRWLDTQGSAKYLDMAQQYQHLGPLYEVPEGLRNKARHNEPYYPPVEPARPVGSLKTA.

Residues Met-1 to Lys-189 are enoyl-CoA hydratase/isomerase. Residue Asp-296 participates in substrate binding. The tract at residues Glu-311 to Ala-729 is 3-hydroxyacyl-CoA dehydrogenase. NAD(+) is bound by residues Met-324, Asp-343, Val-400 to Glu-402, Lys-407, and Ser-429. His-450 (for 3-hydroxyacyl-CoA dehydrogenase activity) is an active-site residue. Residue Asn-453 participates in NAD(+) binding. Residues Asn-500 and Tyr-660 each contribute to the substrate site. The interval Arg-708–Ala-729 is disordered.

The protein in the N-terminal section; belongs to the enoyl-CoA hydratase/isomerase family. This sequence in the C-terminal section; belongs to the 3-hydroxyacyl-CoA dehydrogenase family. As to quaternary structure, heterotetramer of two alpha chains (FadB) and two beta chains (FadA).

It catalyses the reaction a (3S)-3-hydroxyacyl-CoA + NAD(+) = a 3-oxoacyl-CoA + NADH + H(+). The enzyme catalyses a (3S)-3-hydroxyacyl-CoA = a (2E)-enoyl-CoA + H2O. It carries out the reaction a 4-saturated-(3S)-3-hydroxyacyl-CoA = a (3E)-enoyl-CoA + H2O. The catalysed reaction is (3S)-3-hydroxybutanoyl-CoA = (3R)-3-hydroxybutanoyl-CoA. It catalyses the reaction a (3Z)-enoyl-CoA = a 4-saturated (2E)-enoyl-CoA. The enzyme catalyses a (3E)-enoyl-CoA = a 4-saturated (2E)-enoyl-CoA. It participates in lipid metabolism; fatty acid beta-oxidation. Involved in the aerobic and anaerobic degradation of long-chain fatty acids via beta-oxidation cycle. Catalyzes the formation of 3-oxoacyl-CoA from enoyl-CoA via L-3-hydroxyacyl-CoA. It can also use D-3-hydroxyacyl-CoA and cis-3-enoyl-CoA as substrate. The polypeptide is Fatty acid oxidation complex subunit alpha (Salmonella schwarzengrund (strain CVM19633)).